The primary structure comprises 337 residues: 4-hydroxy-2-oxovalerate aldolase (337 aa).

In terms of domain architecture, Pyruvate carboxyltransferase spans 6 to 256; sequence IRIMDTTLRD…ETGIDLFQIM (251 aa). 14–15 lines the substrate pocket; it reads RD. D15 is a binding site for Mn(2+). Catalysis depends on H18, which acts as the Proton acceptor. Substrate-binding residues include S168 and H195. Residues H195 and H197 each coordinate Mn(2+). Y286 provides a ligand contact to substrate.

This sequence belongs to the 4-hydroxy-2-oxovalerate aldolase family.

It carries out the reaction (S)-4-hydroxy-2-oxopentanoate = acetaldehyde + pyruvate. This is 4-hydroxy-2-oxovalerate aldolase (nahM) from Geobacillus genomosp. 3.